The chain runs to 31 residues: uncharacterized protein (31 aa).

A disordered region spans residues 1-31; that stretch reads MKKLERMSEVSQMCSEAKKNRKRMSVVSSVA.

This is an uncharacterized protein from Sulfolobus islandicus filamentous virus (isolate Iceland/Hveragerdi) (SIFV).